A 414-amino-acid chain; its full sequence is 5-aminolevulinate synthase (414 aa).

Positions 22, 133, and 152 each coordinate substrate. Residues Ser185, His213, and Thr241 each contribute to the pyridoxal 5'-phosphate site. The active site involves Lys244. An N6-(pyridoxal phosphate)lysine modification is found at Lys244. The pyridoxal 5'-phosphate site is built by Thr273 and Thr274. Thr359 lines the substrate pocket.

This sequence belongs to the class-II pyridoxal-phosphate-dependent aminotransferase family. Homodimer. It depends on pyridoxal 5'-phosphate as a cofactor.

The enzyme catalyses succinyl-CoA + glycine + H(+) = 5-aminolevulinate + CO2 + CoA. Its pathway is porphyrin-containing compound metabolism; protoporphyrin-IX biosynthesis; 5-aminolevulinate from glycine: step 1/1. The sequence is that of 5-aminolevulinate synthase (hemA) from Rickettsia prowazekii (strain Madrid E).